Consider the following 352-residue polypeptide: UDP-N-acetylglucosamine--N-acetylmuramyl-(pentapeptide) pyrophosphoryl-undecaprenol N-acetylglucosamine transferase (352 aa).

2 residues coordinate UDP-N-acetyl-alpha-D-glucosamine: Ser195 and Gln287.

This sequence belongs to the glycosyltransferase 28 family. MurG subfamily.

Its subcellular location is the cell membrane. The enzyme catalyses Mur2Ac(oyl-L-Ala-gamma-D-Glu-L-Lys-D-Ala-D-Ala)-di-trans,octa-cis-undecaprenyl diphosphate + UDP-N-acetyl-alpha-D-glucosamine = beta-D-GlcNAc-(1-&gt;4)-Mur2Ac(oyl-L-Ala-gamma-D-Glu-L-Lys-D-Ala-D-Ala)-di-trans,octa-cis-undecaprenyl diphosphate + UDP + H(+). Its pathway is cell wall biogenesis; peptidoglycan biosynthesis. In terms of biological role, cell wall formation. Catalyzes the transfer of a GlcNAc subunit on undecaprenyl-pyrophosphoryl-MurNAc-pentapeptide (lipid intermediate I) to form undecaprenyl-pyrophosphoryl-MurNAc-(pentapeptide)GlcNAc (lipid intermediate II). In Streptococcus pneumoniae serotype 4 (strain ATCC BAA-334 / TIGR4), this protein is UDP-N-acetylglucosamine--N-acetylmuramyl-(pentapeptide) pyrophosphoryl-undecaprenol N-acetylglucosamine transferase.